A 31-amino-acid chain; its full sequence is MLTLTSYFGFLLAALTITLALFIGLNKIRLI.

Residues 4-24 (LTSYFGFLLAALTITLALFIG) form a helical membrane-spanning segment.

The protein belongs to the PetL family. As to quaternary structure, the 4 large subunits of the cytochrome b6-f complex are cytochrome b6, subunit IV (17 kDa polypeptide, PetD), cytochrome f and the Rieske protein, while the 4 small subunits are PetG, PetL, PetM and PetN. The complex functions as a dimer.

It is found in the plastid. It localises to the chloroplast thylakoid membrane. Functionally, component of the cytochrome b6-f complex, which mediates electron transfer between photosystem II (PSII) and photosystem I (PSI), cyclic electron flow around PSI, and state transitions. PetL is important for photoautotrophic growth as well as for electron transfer efficiency and stability of the cytochrome b6-f complex. This chain is Cytochrome b6-f complex subunit 6, found in Triticum aestivum (Wheat).